Consider the following 268-residue polypeptide: 3-methyl-2-oxobutanoate hydroxymethyltransferase (268 aa).

Mg(2+)-binding residues include aspartate 41 and aspartate 80. 3-methyl-2-oxobutanoate-binding positions include 41 to 42 (DS), aspartate 80, and lysine 110. Residue glutamate 112 coordinates Mg(2+). Glutamate 178 functions as the Proton acceptor in the catalytic mechanism.

Belongs to the PanB family. Homodecamer; pentamer of dimers. Requires Mg(2+) as cofactor.

The protein resides in the cytoplasm. The catalysed reaction is 3-methyl-2-oxobutanoate + (6R)-5,10-methylene-5,6,7,8-tetrahydrofolate + H2O = 2-dehydropantoate + (6S)-5,6,7,8-tetrahydrofolate. It functions in the pathway cofactor biosynthesis; coenzyme A biosynthesis. Functionally, catalyzes the reversible reaction in which hydroxymethyl group from 5,10-methylenetetrahydrofolate is transferred onto alpha-ketoisovalerate to form ketopantoate. This Natronomonas pharaonis (strain ATCC 35678 / DSM 2160 / CIP 103997 / JCM 8858 / NBRC 14720 / NCIMB 2260 / Gabara) (Halobacterium pharaonis) protein is 3-methyl-2-oxobutanoate hydroxymethyltransferase.